Consider the following 386-residue polypeptide: S-adenosylmethionine synthase (386 aa).

His-16 is an ATP binding site. Asp-18 is a Mg(2+) binding site. Glu-44 is a K(+) binding site. Residues Glu-57 and Gln-100 each contribute to the L-methionine site. The interval 100–110 (QSPDINQGVDQ) is flexible loop. ATP contacts are provided by residues 164–166 (DGK), 230–231 (RF), Asp-239, 245–246 (RK), Ala-262, and Lys-266. Asp-239 lines the L-methionine pocket. Lys-270 provides a ligand contact to L-methionine.

Belongs to the AdoMet synthase family. Homotetramer; dimer of dimers. Mg(2+) is required as a cofactor. The cofactor is K(+).

The protein resides in the cytoplasm. The catalysed reaction is L-methionine + ATP + H2O = S-adenosyl-L-methionine + phosphate + diphosphate. The protein operates within amino-acid biosynthesis; S-adenosyl-L-methionine biosynthesis; S-adenosyl-L-methionine from L-methionine: step 1/1. In terms of biological role, catalyzes the formation of S-adenosylmethionine (AdoMet) from methionine and ATP. The overall synthetic reaction is composed of two sequential steps, AdoMet formation and the subsequent tripolyphosphate hydrolysis which occurs prior to release of AdoMet from the enzyme. In Nitratiruptor sp. (strain SB155-2), this protein is S-adenosylmethionine synthase.